The sequence spans 117 residues: Big defensin (117 aa).

The first 23 residues, 1-23, serve as a signal peptide directing secretion; sequence MEKKTAYCLLFLVLLVPYTALGA. The propeptide occupies 24-33; that stretch reads VLKRAPAKKE. Disulfide bonds link cysteine 82-cysteine 112, cysteine 89-cysteine 107, and cysteine 93-cysteine 113.

The protein belongs to the big defensin family.

It is found in the secreted. Functionally, significantly inhibits the growth of Gram-negative and Gram-positive bacteria and fungi in vitro. In Branchiostoma belcheri (Amphioxus), this protein is Big defensin.